An 832-amino-acid polypeptide reads, in one-letter code: Protein P (832 aa).

The tract at residues 1 to 177 is terminal protein domain (TP); it reads MPLSYQHFRR…FCGSPYSWEQ (177 aa). A spacer region spans residues 178–335; that stretch reads ELQHGAESFH…YCLSHIVNLL (158 aa). The segment at 241–263 is disordered; it reads RRPFGVEPSGSGHTTNLASKSAS. A compositionally biased stretch (polar residues) spans 251–263; sequence SGHTTNLASKSAS. The interval 336 to 679 is polymerase/reverse transcriptase domain (RT); the sequence is EDWGPCAEHG…YLNLYPVARQ (344 aa). In terms of domain architecture, Reverse transcriptase spans 346 to 589; that stretch reads EHHIRIPRTP…YSLHFMGYVI (244 aa). Mg(2+)-binding residues include D418, D540, and D541.

Belongs to the hepadnaviridae P protein family.

It catalyses the reaction DNA(n) + a 2'-deoxyribonucleoside 5'-triphosphate = DNA(n+1) + diphosphate. The enzyme catalyses Endonucleolytic cleavage to 5'-phosphomonoester.. With respect to regulation, activated by host HSP70 and HSP40 in vitro to be able to bind the epsilon loop of the pgRNA. Because deletion of the RNase H region renders the protein partly chaperone-independent, the chaperones may be needed indirectly to relieve occlusion of the RNA-binding site by this domain. Inhibited by several reverse-transcriptase inhibitors: Lamivudine, Adefovir and Entecavir. In terms of biological role, multifunctional enzyme that converts the viral RNA genome into dsDNA in viral cytoplasmic capsids. This enzyme displays a DNA polymerase activity that can copy either DNA or RNA templates, and a ribonuclease H (RNase H) activity that cleaves the RNA strand of RNA-DNA heteroduplexes in a partially processive 3'- to 5'-endonucleasic mode. Neo-synthesized pregenomic RNA (pgRNA) are encapsidated together with the P protein, and reverse-transcribed inside the nucleocapsid. Initiation of reverse-transcription occurs first by binding the epsilon loop on the pgRNA genome, and is initiated by protein priming, thereby the 5'-end of (-)DNA is covalently linked to P protein. Partial (+)DNA is synthesized from the (-)DNA template and generates the relaxed circular DNA (RC-DNA) genome. After budding and infection, the RC-DNA migrates in the nucleus, and is converted into a plasmid-like covalently closed circular DNA (cccDNA). The activity of P protein does not seem to be necessary for cccDNA generation, and is presumably released from (+)DNA by host nuclear DNA repair machinery. This chain is Protein P, found in Homo sapiens (Human).